A 353-amino-acid polypeptide reads, in one-letter code: Photosystem II protein D1 (353 aa).

Threonine 2 carries the N-acetylthreonine modification. Threonine 2 carries the phosphothreonine modification. The next 3 helical transmembrane spans lie at 29–46 (YIGW…TATS), 118–133 (HFLL…EWEL), and 142–156 (WIAV…AATA). A chlorophyll a-binding site is contributed by histidine 118. Tyrosine 126 lines the pheophytin a pocket. Positions 170 and 189 each coordinate [CaMn4O5] cluster. The helical transmembrane segment at 197–218 (FHMLGVAGVFGGSLFSAMHGSL) threads the bilayer. A chlorophyll a-binding site is contributed by histidine 198. Residues histidine 215 and 264–265 (SF) contribute to the a quinone site. Histidine 215 contacts Fe cation. Residue histidine 272 coordinates Fe cation. The helical transmembrane segment at 274-288 (FLAAWPVVGIWFTAL) threads the bilayer. [CaMn4O5] cluster-binding residues include histidine 332, glutamate 333, aspartate 342, and alanine 344. Positions 345-353 (AVEAPSTIG) are excised as a propeptide.

The protein belongs to the reaction center PufL/M/PsbA/D family. As to quaternary structure, PSII is composed of 1 copy each of membrane proteins PsbA, PsbB, PsbC, PsbD, PsbE, PsbF, PsbH, PsbI, PsbJ, PsbK, PsbL, PsbM, PsbT, PsbX, PsbY, PsbZ, Psb30/Ycf12, at least 3 peripheral proteins of the oxygen-evolving complex and a large number of cofactors. It forms dimeric complexes. The D1/D2 heterodimer binds P680, chlorophylls that are the primary electron donor of PSII, and subsequent electron acceptors. It shares a non-heme iron and each subunit binds pheophytin, quinone, additional chlorophylls, carotenoids and lipids. D1 provides most of the ligands for the Mn4-Ca-O5 cluster of the oxygen-evolving complex (OEC). There is also a Cl(-1) ion associated with D1 and D2, which is required for oxygen evolution. The PSII complex binds additional chlorophylls, carotenoids and specific lipids. is required as a cofactor. In terms of processing, tyr-161 forms a radical intermediate that is referred to as redox-active TyrZ, YZ or Y-Z. C-terminally processed by CTPA; processing is essential to allow assembly of the oxygen-evolving complex and thus photosynthetic growth.

Its subcellular location is the plastid. It localises to the chloroplast thylakoid membrane. It carries out the reaction 2 a plastoquinone + 4 hnu + 2 H2O = 2 a plastoquinol + O2. In terms of biological role, photosystem II (PSII) is a light-driven water:plastoquinone oxidoreductase that uses light energy to abstract electrons from H(2)O, generating O(2) and a proton gradient subsequently used for ATP formation. It consists of a core antenna complex that captures photons, and an electron transfer chain that converts photonic excitation into a charge separation. The D1/D2 (PsbA/PsbD) reaction center heterodimer binds P680, the primary electron donor of PSII as well as several subsequent electron acceptors. The protein is Photosystem II protein D1 of Lemna minor (Common duckweed).